The following is a 117-amino-acid chain: Non-specific lipid-transfer protein (117 aa).

The N-terminal stretch at Met-1–Ala-26 is a signal peptide. 4 disulfide bridges follow: Cys-29–Cys-76, Cys-39–Cys-53, Cys-54–Cys-99, and Cys-74–Cys-113.

The protein belongs to the plant LTP family.

Its function is as follows. Plant non-specific lipid-transfer proteins transfer phospholipids as well as galactolipids across membranes. May play a role in wax or cutin deposition in the cell walls of expanding epidermal cells and certain secretory tissues. The sequence is that of Non-specific lipid-transfer protein from Prunus avium (Cherry).